The sequence spans 309 residues: Coproporphyrin III ferrochelatase (309 aa).

Residues tyrosine 12, arginine 29, 45–46 (RY), serine 53, and tyrosine 124 each bind Fe-coproporphyrin III. Fe(2+)-binding residues include histidine 182 and glutamate 263.

It belongs to the ferrochelatase family.

It localises to the cytoplasm. The enzyme catalyses Fe-coproporphyrin III + 2 H(+) = coproporphyrin III + Fe(2+). The protein operates within porphyrin-containing compound metabolism; protoheme biosynthesis. In terms of biological role, involved in coproporphyrin-dependent heme b biosynthesis. Catalyzes the insertion of ferrous iron into coproporphyrin III to form Fe-coproporphyrin III. The chain is Coproporphyrin III ferrochelatase from Listeria innocua serovar 6a (strain ATCC BAA-680 / CLIP 11262).